Consider the following 865-residue polypeptide: Bifunctional uridylyltransferase/uridylyl-removing enzyme (865 aa).

The segment at Met-1–Leu-318 is uridylyltransferase. The interval Ile-319–Leu-675 is uridylyl-removing. The region spanning Val-437–Leu-559 is the HD domain. ACT domains lie at Gln-676–His-762 and Arg-789–Ala-865. The segment at Asp-747–Arg-767 is disordered. The span at Ala-751–Arg-767 shows a compositional bias: basic residues.

It belongs to the GlnD family. It depends on Mg(2+) as a cofactor.

The catalysed reaction is [protein-PII]-L-tyrosine + UTP = [protein-PII]-uridylyl-L-tyrosine + diphosphate. It catalyses the reaction [protein-PII]-uridylyl-L-tyrosine + H2O = [protein-PII]-L-tyrosine + UMP + H(+). With respect to regulation, uridylyltransferase (UTase) activity is inhibited by glutamine, while glutamine activates uridylyl-removing (UR) activity. Modifies, by uridylylation and deuridylylation, the PII regulatory proteins (GlnB and homologs), in response to the nitrogen status of the cell that GlnD senses through the glutamine level. Under low glutamine levels, catalyzes the conversion of the PII proteins and UTP to PII-UMP and PPi, while under higher glutamine levels, GlnD hydrolyzes PII-UMP to PII and UMP (deuridylylation). Thus, controls uridylylation state and activity of the PII proteins, and plays an important role in the regulation of nitrogen assimilation and metabolism. This chain is Bifunctional uridylyltransferase/uridylyl-removing enzyme, found in Bordetella parapertussis (strain 12822 / ATCC BAA-587 / NCTC 13253).